We begin with the raw amino-acid sequence, 294 residues long: Acetylglutamate kinase (294 aa).

Residues 64–65 (GG), arginine 86, and asparagine 189 each bind substrate.

This sequence belongs to the acetylglutamate kinase family. ArgB subfamily.

It is found in the cytoplasm. It catalyses the reaction N-acetyl-L-glutamate + ATP = N-acetyl-L-glutamyl 5-phosphate + ADP. The protein operates within amino-acid biosynthesis; L-arginine biosynthesis; N(2)-acetyl-L-ornithine from L-glutamate: step 2/4. Catalyzes the ATP-dependent phosphorylation of N-acetyl-L-glutamate. The sequence is that of Acetylglutamate kinase from Carboxydothermus hydrogenoformans (strain ATCC BAA-161 / DSM 6008 / Z-2901).